Here is a 397-residue protein sequence, read N- to C-terminus: Lysophospholipid transporter LplT (397 aa).

The Periplasmic portion of the chain corresponds to 1–17 (MSESVHTNTSLWSKGMK). The helical transmembrane segment at 18 to 38 (AVIVAQFLSAFGDNALLFATL) threads the bilayer. Topologically, residues 39–52 (ALLKAQFYPEWSQP) are cytoplasmic. A helical membrane pass occupies residues 53–73 (ILQMVFVGAYILFAPFVGQVA). Topologically, residues 74–90 (DSFAKGRVMMFANGLKL) are periplasmic. Residues 91 to 111 (LGAASICFGINPFLGYTLVGV) traverse the membrane as a helical segment. Topologically, residues 112-144 (GAAAYSPAKYGILGELTTGSKLVKANGLMEAST) are cytoplasmic. The chain crosses the membrane as a helical span at residues 145-165 (IAAILLGSVAGGVLADWHVLV). A topological domain (periplasmic) is located at residue Ala-166. Residues 167 to 187 (LAACALAYGGAVVANIYIPKL) traverse the membrane as a helical segment. Topologically, residues 188-226 (AAARPGQSWNLINMTRSFLNACTSLWRNGETRFSLVGTS) are cytoplasmic. A helical membrane pass occupies residues 227–247 (LFWGAGVTLRFLLVLWVPVAL). The Periplasmic portion of the chain corresponds to 248–256 (GITDNATPT). The chain crosses the membrane as a helical span at residues 257–277 (YLNAMVAIGIVVGAGAAAKLV). The Cytoplasmic portion of the chain corresponds to 278-280 (TLE). The helical transmembrane segment at 281–301 (TMSRCMPAGILIGVVVLIFSL) threads the bilayer. Over 302–304 (QHE) the chain is Periplasmic. A helical membrane pass occupies residues 305–325 (LLPAYALLMLIGVMGGFFVVP). The Cytoplasmic portion of the chain corresponds to 326–343 (LNALLQERGKKSVGAGNA). The chain crosses the membrane as a helical span at residues 344 to 364 (IAVQNLGENSAMLLMLGIYSL). Residues 365 to 366 (AV) are Periplasmic-facing. Residues 367-387 (MVGIPVVPIGIGFGALFALAI) form a helical membrane-spanning segment. Topologically, residues 388–397 (TALWIWQRRH) are cytoplasmic.

It belongs to the major facilitator superfamily. LplT (TC 2.A.1.42) family.

It localises to the cell inner membrane. Its function is as follows. Catalyzes the facilitated diffusion of 2-acyl-glycero-3-phosphoethanolamine (2-acyl-GPE) into the cell. This chain is Lysophospholipid transporter LplT, found in Shigella sonnei (strain Ss046).